The primary structure comprises 443 residues: MLVTSLIALLPAIAAAQVSGTVGPRTSASAKAAEKVCNVLDYGASANSTIDIGPPLKEAFQDCQTGGLVYIPEGDYLLSSWVSLVYGSGWALQLDGIIYRDKNVTDGGNMIFIEHTSDIEIFSNNSAGAIQGYGYLFHEQDEYGPRILRLNNVTDFSVHDLILVDSPAYFLNLVESYNGEVYNMVIRGASMGGLDGIDISGANYWIHDVEVTNGDECVTVKSPSANVRVENVFCNHSGGCAMGSLGTDTNISNIEFENIYTYNSTQMYMIKSNGGNGTVTNCSFKNFIGYSNAYMLDLDTYWGDESDGDGIKYENIGFENWKGTSSNGIQRSPIRILCPDANPCTNITLTAVELWTDTGDYVKQECSSAYGEGECLRQQNGTLASYSFTTTITSVPVTAYSPTTTMPGLISTSMDTTTSIPIPTIPTSFFPGASAYSTLMANM.

The N-terminal stretch at 1-16 (MLVTSLIALLPAIAAA) is a signal peptide. C37 and C63 are disulfide-bonded. N-linked (GlcNAc...) asparagine glycosylation is found at N47, N103, N124, and N152. The Proton donor role is filled by D215. An intrachain disulfide couples C217 to C234. 5 N-linked (GlcNAc...) asparagine glycosylation sites follow: N235, N250, N263, N276, and N281. C338 and C344 are disulfide-bonded. Residue N346 is glycosylated (N-linked (GlcNAc...) asparagine). C366 and C375 are joined by a disulfide. Residue N380 is glycosylated (N-linked (GlcNAc...) asparagine).

This sequence belongs to the glycosyl hydrolase 28 family.

The protein localises to the secreted. Its function is as follows. Pectinolytic enzymes consist of four classes of enzymes: pectine lyase, polygalacturonase, pectin methylesterase and rhamnogalacturonase. Hydrolyzes alpha-D-galacturonopyranosyl-(1,2)-alpha-L-rhamnopyranosyl linkages in the backbone of the hairy regions of pectins. This chain is Putative rhamnogalacturonase D (rhgD), found in Aspergillus niger (strain ATCC MYA-4892 / CBS 513.88 / FGSC A1513).